A 584-amino-acid polypeptide reads, in one-letter code: (+)-larreatricin hydroxylase, chloroplastic (584 aa).

The transit peptide at 1 to 32 (MASLSSQSKLLATPYSFPYHTKPSRVSLRRVS) directs the protein to the chloroplast. The transit peptide at 33–79 (CKASNDNKDKPNDQEKTFSIDRRNMLIGLGGLYGASNVFPSNQSTLA) directs the protein to the thylakoid. Disulfide bonds link Cys-91-Cys-106 and Cys-105-Cys-168. Residues His-167, His-188, His-197, His-319, His-323, and His-353 each contribute to the Cu cation site. The segment at residues 171-188 (CNGAYDQVGFPDVNIQVH) is a cross-link (2'-(S-cysteinyl)-histidine (Cys-His)). Positions 432 to 584 (RLRSKATTTT…KIEFVRDEED (153 aa)) are cleaved as a propeptide — removed in mature form.

The protein belongs to the tyrosinase family. Cu(2+) serves as cofactor.

The protein resides in the plastid. It localises to the chloroplast thylakoid lumen. It carries out the reaction (+)-larreatricin + AH2 + O2 = (+)-3'-hydroxylarreatricin + A + H2O. Enantio-specific polyphenol oxidase involved in aromatic ring hydroxylation. Involved in the biosynthesis of the creosote bush 8-8' linked lignans. Has a strong preference for the 3' position of (+)-larreatricin. The chain is (+)-larreatricin hydroxylase, chloroplastic from Larrea tridentata (Creosote bush).